The primary structure comprises 225 residues: Lipid A 4'-phosphatase (225 aa).

6 helical membrane passes run 29–49 (SAFT…YILL), 51–71 (NFHW…ITFA), 110–130 (FGFP…LICL), 136–156 (LSIF…YLGL), 160–180 (GDLV…YFIA), and 203–223 (TEVM…YSIV).

The protein belongs to the lipid A LpxF 4'-phosphatase family.

The protein localises to the cell inner membrane. The protein operates within bacterial outer membrane biogenesis; LPS lipid A biosynthesis. Probably removes the 4'-phosphate group from lipid A. Removal of this phosphate group confers resistance to cationic antimicrobial peptides (CAMPs), inflammation-associated peptides produced by the human host. This LPS modification helps maintain the stability of this commensal bacterium in gut microbiota. This Bacteroides thetaiotaomicron (strain ATCC 29148 / DSM 2079 / JCM 5827 / CCUG 10774 / NCTC 10582 / VPI-5482 / E50) protein is Lipid A 4'-phosphatase.